We begin with the raw amino-acid sequence, 210 residues long: DNA replication complex GINS protein PSF3 (210 aa).

Belongs to the GINS3/PSF3 family. Component of the GINS complex which is a heterotetramer of gins1/psf1, gins2/psf2, gins3/psf3 and gins4/sld5. Component of the CMG helicase complex, composed of the mcm2-7 complex, the GINS complex and cdc45.

The protein resides in the nucleus. Its subcellular location is the chromosome. In terms of biological role, required for correct functioning of the GINS complex, a complex that plays an essential role in the initiation of DNA replication, and progression of DNA replication forks. GINS complex is a core component of CDC45-MCM-GINS (CMG) helicase, the molecular machine that unwinds template DNA during replication, and around which the replisome is built. This Xenopus laevis (African clawed frog) protein is DNA replication complex GINS protein PSF3.